We begin with the raw amino-acid sequence, 329 residues long: UPF0421 protein SH1063 (329 aa).

5 helical membrane-spanning segments follow: residues 25-45 (LFCL…IVTI), 60-80 (LPAT…FGDP), 87-107 (FSAL…GTTV), 108-128 (AVLT…FNFF), and 131-151 (LLTA…VLPP).

It belongs to the UPF0421 family.

The protein resides in the cell membrane. This chain is UPF0421 protein SH1063, found in Staphylococcus haemolyticus (strain JCSC1435).